A 248-amino-acid chain; its full sequence is Thioesterase FSL2 (248 aa).

Active-site charge relay system residues include serine 125, aspartate 195, and histidine 223.

The protein belongs to the LovG family.

It functions in the pathway secondary metabolite biosynthesis. Its function is as follows. Thioesterase; part of the gene cluster that mediates the biosynthesis of fusarielins F, G and H, decaketide compounds with 5 methylations and a decaline core that act as mycoestrogens as they stimulate growth of MCF-7 breast cancer cells. The initial compound in the pathway is produced by the reducing polyketide synthase FSL1. FSL1 lacks an active enoyl reductase (ER) domain and biosynthesis of fusarielins relies on the trans-acting enoyl reductase FSL5, before it is released through hydrolysis catalyzed by the thioesterase FSL2. Fusarielins F, G, and H have a C11=C12 cis double bond and is fully reduced between C10 and C11 and between C12 and C13. FSL3 can be involved in the formation of the C11=C12 cis double bond by moving a hypothetical C10=C11 or C12=C13 trans double bond to form prefusarielin. Prefusarielin is oxygenated at C15 and C16 by the cytochrome P450 monooxygenase FSL4, resulting in fusarielin F, which subsequently is epoxidized into fusarielin G by the same enzyme. The final step in the pathway is a reduction of the carboxylic acid moiety to yield fusarielin H via a still undetermined mechanism. This chain is Thioesterase FSL2, found in Gibberella zeae (strain ATCC MYA-4620 / CBS 123657 / FGSC 9075 / NRRL 31084 / PH-1) (Wheat head blight fungus).